Reading from the N-terminus, the 375-residue chain is 23S rRNA (uracil(747)-C(5))-methyltransferase RlmC (375 aa).

[4Fe-4S] cluster is bound by residues Cys-3, Cys-11, Cys-14, and Cys-87. S-adenosyl-L-methionine is bound by residues Gln-212, Phe-241, Glu-262, and Asn-307. Cys-334 functions as the Nucleophile in the catalytic mechanism.

This sequence belongs to the class I-like SAM-binding methyltransferase superfamily. RNA M5U methyltransferase family. RlmC subfamily.

The enzyme catalyses uridine(747) in 23S rRNA + S-adenosyl-L-methionine = 5-methyluridine(747) in 23S rRNA + S-adenosyl-L-homocysteine + H(+). Catalyzes the formation of 5-methyl-uridine at position 747 (m5U747) in 23S rRNA. The protein is 23S rRNA (uracil(747)-C(5))-methyltransferase RlmC of Salmonella paratyphi A (strain ATCC 9150 / SARB42).